The primary structure comprises 371 residues: Glycosyltransferase 8 domain-containing protein 1 (371 aa).

Topologically, residues 1–7 (MSFRKVN) are cytoplasmic. The chain crosses the membrane as a helical; Signal-anchor for type II membrane protein span at residues 8 to 28 (IIILVLAVALFLLVLHHNFLS). Topologically, residues 29 to 371 (LSSLLRNEVT…RRYTEISNIK (343 aa)) are lumenal. Residues asparagine 249 and asparagine 257 are each glycosylated (N-linked (GlcNAc...) asparagine).

This sequence belongs to the glycosyltransferase 8 family.

It is found in the membrane. This is Glycosyltransferase 8 domain-containing protein 1 (GLT8D1) from Homo sapiens (Human).